A 487-amino-acid polypeptide reads, in one-letter code: L-tartrate/succinate antiporter (487 aa).

The next 14 helical transmembrane spans lie at 10 to 30, 33 to 53, 54 to 74, 93 to 113, 137 to 157, 189 to 209, 236 to 256, 292 to 312, 313 to 333, 340 to 360, 370 to 390, 393 to 413, 418 to 438, and 465 to 485; these read YLAPLAVIAIIALIPVPAGLE, TWLYFAVFTGVIVGLILEPVP, GAVVAMVGISIIAILSPWLLF, WAVSGFSNSVIWLIFAAFMFG, TLFLGYAVMFSELILAPVTPS, IGSYIMWMGIVADCVTSAIFL, FLGMLPLSILLVLLVPWLAYV, LIVGALVLWIFGGDYIDAAMV, GYSVVALMLLLRIISWDDIVS, VFFWLASLITLATGLNNTGFI, SLSGYSPTMVMVALIVVFYLL, FFASATAYTSALAPMMIAAAL, IPLPVFCLMVGAAIGLGSILT, and IFGLIFLVLLVITGLLWMPVV.

The protein belongs to the SLC13A/DASS transporter (TC 2.A.47) family. DIT1 subfamily.

It localises to the cell inner membrane. It carries out the reaction (2R,3R)-tartrate(out) + succinate(in) = (2R,3R)-tartrate(in) + succinate(out). Catalyzes the uptake of tartrate in exchange for intracellular succinate. Essential for anaerobic L-tartrate fermentation. This chain is L-tartrate/succinate antiporter (ttdT), found in Shigella sonnei (strain Ss046).